The following is a 115-amino-acid chain: Large ribosomal subunit protein bL31B (115 aa).

The protein belongs to the bacterial ribosomal protein bL31 family. Type B subfamily. As to quaternary structure, part of the 50S ribosomal subunit.

This Polynucleobacter asymbioticus (strain DSM 18221 / CIP 109841 / QLW-P1DMWA-1) (Polynucleobacter necessarius subsp. asymbioticus) protein is Large ribosomal subunit protein bL31B.